The chain runs to 591 residues: V-type ATP synthase alpha chain (591 aa).

An ATP-binding site is contributed by 233–240; that stretch reads GPFGAGKT.

The protein belongs to the ATPase alpha/beta chains family.

The catalysed reaction is ATP + H2O + 4 H(+)(in) = ADP + phosphate + 5 H(+)(out). In terms of biological role, produces ATP from ADP in the presence of a proton gradient across the membrane. The V-type alpha chain is a catalytic subunit. The chain is V-type ATP synthase alpha chain from Streptococcus pneumoniae serotype 19F (strain G54).